The following is a 273-amino-acid chain: 3-methyl-2-oxobutanoate hydroxymethyltransferase (273 aa).

2 residues coordinate Mg(2+): D53 and D92. Residues 53–54 (DS), D92, and K122 each bind 3-methyl-2-oxobutanoate. E124 is a Mg(2+) binding site. Catalysis depends on E191, which acts as the Proton acceptor.

This sequence belongs to the PanB family. As to quaternary structure, homodecamer; pentamer of dimers. Requires Mg(2+) as cofactor.

The protein localises to the cytoplasm. It catalyses the reaction 3-methyl-2-oxobutanoate + (6R)-5,10-methylene-5,6,7,8-tetrahydrofolate + H2O = 2-dehydropantoate + (6S)-5,6,7,8-tetrahydrofolate. The protein operates within cofactor biosynthesis; (R)-pantothenate biosynthesis; (R)-pantoate from 3-methyl-2-oxobutanoate: step 1/2. Functionally, catalyzes the reversible reaction in which hydroxymethyl group from 5,10-methylenetetrahydrofolate is transferred onto alpha-ketoisovalerate to form ketopantoate. The polypeptide is 3-methyl-2-oxobutanoate hydroxymethyltransferase (Bacteroides fragilis (strain ATCC 25285 / DSM 2151 / CCUG 4856 / JCM 11019 / LMG 10263 / NCTC 9343 / Onslow / VPI 2553 / EN-2)).